We begin with the raw amino-acid sequence, 500 residues long: Cysteine-rich secretory protein LCCL domain-containing 1 (500 aa).

A signal peptide spans 1-23; it reads MKCTAREWLRVTTVLFMARAIPA. Residues 66-206 form the SCP domain; that stretch reads LDLHNKLRSQ…PKAVYLVCNY (141 aa). Basic and acidic residues predominate over residues 254–280; sequence EETNEIERQQSQVHDTHVRTRSDDSSR. Positions 254-281 are disordered; it reads EETNEIERQQSQVHDTHVRTRSDDSSRN. 2 LCCL domains span residues 289 to 384 and 390 to 492; these read MSQI…ANSF and TVQA…PGGK. Intrachain disulfides connect C295–C313, C317–C337, C396–C418, and C422–C445.

This sequence belongs to the CRISP family.

The protein resides in the secreted. The sequence is that of Cysteine-rich secretory protein LCCL domain-containing 1 (CRISPLD1) from Homo sapiens (Human).